The primary structure comprises 102 residues: ATP-dependent Clp protease adapter protein ClpS (102 aa).

Belongs to the ClpS family. In terms of assembly, binds to the N-terminal domain of the chaperone ClpA.

Functionally, involved in the modulation of the specificity of the ClpAP-mediated ATP-dependent protein degradation. In Dechloromonas aromatica (strain RCB), this protein is ATP-dependent Clp protease adapter protein ClpS.